The chain runs to 166 residues: Thioredoxin, mitochondrial (166 aa).

Residues 1-59 constitute a mitochondrion transit peptide; sequence MAQRLLLRRFLTSVISRKPPQGVWASLTSTSLQTPPYNAGGLTGTPSPARTFHTTRVCS. Residues 61-166 form the Thioredoxin domain; the sequence is TFNVQDGPDF…LEAFLKKLIG (106 aa). Active-site nucleophile residues include C90 and C93. Cysteines 90 and 93 form a disulfide. K152 carries the post-translational modification N6-acetyllysine; alternate. K152 is modified (N6-succinyllysine; alternate).

This sequence belongs to the thioredoxin family. As to quaternary structure, monomer. In terms of tissue distribution, expressed in several tissues with the highest expression levels in heart, muscle, kidney and adrenal gland.

The protein localises to the mitochondrion. In terms of biological role, important for the control of mitochondrial reactive oxygen species homeostasis, apoptosis regulation and cell viability. Is involved in various redox reactions including the reduction of protein disulfide bonds, through the reversible oxidation of its active center dithiol to a disulfide. The chain is Thioredoxin, mitochondrial (Txn2) from Rattus norvegicus (Rat).